Consider the following 192-residue polypeptide: Ion-translocating oxidoreductase complex subunit A (192 aa).

A run of 6 helical transmembrane segments spans residues 5–25 (LLLL…FLGL), 38–58 (AIGM…LSFL), 72–92 (LRTM…EMLV), 102–122 (ALGI…VALL), 134–154 (AIYG…FSAM), and 171–191 (AIAM…AGLI).

The protein belongs to the NqrDE/RnfAE family. The complex is composed of six subunits: RnfA, RnfB, RnfC, RnfD, RnfE and RnfG.

Its subcellular location is the cell inner membrane. Its function is as follows. Part of a membrane-bound complex that couples electron transfer with translocation of ions across the membrane. The chain is Ion-translocating oxidoreductase complex subunit A from Shewanella denitrificans (strain OS217 / ATCC BAA-1090 / DSM 15013).